Reading from the N-terminus, the 759-residue chain is LPS-assembly protein LptD (759 aa).

Residues 1 to 45 (MKPLKLELNPRDFNHYQAAFLPYRMKIKQPLHVLCFSVCSLSAVA) form the signal peptide.

It belongs to the LptD family. In terms of assembly, component of the lipopolysaccharide transport and assembly complex. Interacts with LptE and LptA.

The protein localises to the cell outer membrane. Its function is as follows. Together with LptE, is involved in the assembly of lipopolysaccharide (LPS) at the surface of the outer membrane. This chain is LPS-assembly protein LptD, found in Pseudoalteromonas atlantica (strain T6c / ATCC BAA-1087).